We begin with the raw amino-acid sequence, 78 residues long: Small ribosomal subunit protein bS21A (78 aa).

Over residues 30 to 52 (MKARSAYEKPSEKRAREKGEAVR) the composition is skewed to basic and acidic residues. The segment at 30-78 (MKARSAYEKPSEKRAREKGEAVRRQRKLARKKLQREGLLPAPKKAVRAR) is disordered. A compositionally biased stretch (basic residues) spans 53 to 62 (RQRKLARKKL).

It belongs to the bacterial ribosomal protein bS21 family.

In Rhizobium etli (strain ATCC 51251 / DSM 11541 / JCM 21823 / NBRC 15573 / CFN 42), this protein is Small ribosomal subunit protein bS21A.